The chain runs to 822 residues: Sushi domain-containing protein 2 (822 aa).

Residues 1 to 27 form the signal peptide; it reads MKPALLPWALLLLATALGPGPGPTADA. The SMB domain maps to 28–66; the sequence is QESCSMRCGALDGPCSCHPTCSGLGTCCLDFRDFCLEIL. At 28–785 the chain is on the extracellular side; it reads QESCSMRCGA…PKCQPGRSYA (758 aa). Cystine bridges form between Cys31/Cys35, Cys31/Cys44, Cys35/Cys62, Cys42/Cys44, Cys42/Cys55, Cys48/Cys54, and Cys55/Cys62. Asn162 and Asn177 each carry an N-linked (GlcNAc...) asparagine glycan. An AMOP domain is found at 285 to 433; that stretch reads PVAWARTQCQ…PDCPRYMQRR (149 aa). Residues 445-639 form the VWFD domain; that stretch reads RLASAFGDPH…NWTVHNASSL (195 aa). An N-linked (GlcNAc...) asparagine glycan is attached at Asn522. Residues 723–780 form the Sushi domain; it reads VSCGWLAPPPNGQKEGNRYLAGSTIYFHCDNGYSLAGAETSTCQADGTWSSPTPKCQP. 2 disulfides stabilise this stretch: Cys725/Cys765 and Cys751/Cys778. The helical transmembrane segment at 786–806 threads the bilayer; that stretch reads VLLGIIFGGLAVVAAVALVYV. The Cytoplasmic segment spans residues 807-822; the sequence is LLRRRKGNTHVWGAQP.

Interacts with LGALS1; leads to an increased amount of LGALS1 on the cell surface. Interacts with GPR15LG; the interaction is direct. In terms of tissue distribution, highly expressed in breast cancer, but shows a restricted expression pattern in normal tissues such as adipose, adrenal gland, kidney, lung, mammary gland, placenta, thyroid, trachea, and uterus. Also expressed in colon; down-regulated in colon cancer tissues.

The protein localises to the cell membrane. In terms of biological role, may be a cytokine receptor for GPR15LG. May be a tumor suppressor; together with GPR15LG has a growth inhibitory effect on colon cancer cells which includes G1 cell cycle arrest. May play a role in breast tumorigenesis. This chain is Sushi domain-containing protein 2 (SUSD2), found in Homo sapiens (Human).